Here is a 679-residue protein sequence, read N- to C-terminus: UvrABC system protein B (679 aa).

The Helicase ATP-binding domain occupies 31–414 (ENLTDGLAHQ…ELEKSGSEII (384 aa)). Residue 44-51 (GVTGSGKT) participates in ATP binding. Positions 97 to 120 (YYDYYQPEAYVPSSDTFIEKDASI) match the Beta-hairpin motif. The Helicase C-terminal domain maps to 436-589 (QVDDLLSEAR…QTKYNEEHGI (154 aa)). Residues 639–674 (QQQIKKLEQQMYKFAQDLEFEKAAAIRDQLHQLREQ) enclose the UVR domain.

It belongs to the UvrB family. Forms a heterotetramer with UvrA during the search for lesions. Interacts with UvrC in an incision complex.

It is found in the cytoplasm. In terms of biological role, the UvrABC repair system catalyzes the recognition and processing of DNA lesions. A damage recognition complex composed of 2 UvrA and 2 UvrB subunits scans DNA for abnormalities. Upon binding of the UvrA(2)B(2) complex to a putative damaged site, the DNA wraps around one UvrB monomer. DNA wrap is dependent on ATP binding by UvrB and probably causes local melting of the DNA helix, facilitating insertion of UvrB beta-hairpin between the DNA strands. Then UvrB probes one DNA strand for the presence of a lesion. If a lesion is found the UvrA subunits dissociate and the UvrB-DNA preincision complex is formed. This complex is subsequently bound by UvrC and the second UvrB is released. If no lesion is found, the DNA wraps around the other UvrB subunit that will check the other stand for damage. This chain is UvrABC system protein B, found in Haemophilus influenzae (strain ATCC 51907 / DSM 11121 / KW20 / Rd).